An 890-amino-acid chain; its full sequence is Major vault protein (890 aa).

MVP repeat units follow at residues 2–56 (SMEE…VPPR), 57–111 (HYCM…DITP), 112–164 (LQVV…EIIQ), 165–217 (ATVI…DVVD), 218–272 (AVIL…GVVS), 273–323 (VTTL…IQNV), 324–379 (YVLS…ERQA), 380–457 (IPLD…KTRV), and 458–520 (VSYR…LLGP). A disordered region spans residues 425–455 (ELLNKGQDPLADRGEKETSKTPKLSTPRNKT). The span at 434 to 444 (LADRGEKETSK) shows a compositional bias: basic and acidic residues. Residue Lys-444 forms a Glycyl lysine isopeptide (Lys-Gly) (interchain with G-Cter in SUMO2) linkage.

In terms of assembly, the vault ribonucleoprotein particle is a huge (400 A x 670 A) cage structure of 12.9 MDa. It consists of a dimer of half-vaults, with each half-vault comprising 39 identical major vault protein (MVP) chains, PARP4 and one or more vault RNAs (vRNAs). Interacts with TEP1. Interacts with PTEN and activated MAPK1. The phosphorylated protein interacts with the SH2 domains of PTPN11 and SRC. Interacts with APEX1. May interact with ZNF540. Phosphorylated on Tyr residues after EGF stimulation. Post-translationally, dephosphorylated by PTPN11.

The protein localises to the cytoplasm. Its subcellular location is the nucleus. Required for normal vault structure. Vaults are multi-subunit structures that may act as scaffolds for proteins involved in signal transduction. Vaults may also play a role in nucleo-cytoplasmic transport. Down-regulates IFNG-mediated STAT1 signaling and subsequent activation of JAK. Down-regulates SRC activity and signaling through MAP kinases. The chain is Major vault protein (MVP) from Bos taurus (Bovine).